The sequence spans 187 residues: Large ribosomal subunit protein uL13 (187 aa).

The protein belongs to the universal ribosomal protein uL13 family.

The chain is Large ribosomal subunit protein uL13 (rpl13a) from Dictyostelium discoideum (Social amoeba).